We begin with the raw amino-acid sequence, 242 residues long: MTTKLIAGNWKLNGSLAKNAALIDELRRAEMHCVVCVPYPYLAQAQALVAGSLIELGAQDVSEYEQGAYTGEVSAAMLVEFGCRYVIVGHSERRALFGDSDQVVGRKAASALAAGLTPIVCVGETLAERELGEVEAVIRRQLQAVADCVGGEALPTLVVAYEPVWAIGTGRSATPEQVAQTHGFIRAWFSARCDASAVRILYGGSVKPENAAVLFSTDDVDGGLIGGASLVGSDFVAICRAA.

Residue 9–11 participates in substrate binding; the sequence is NWK. His-90 (electrophile) is an active-site residue. Residue Glu-162 is the Proton acceptor of the active site. Substrate-binding positions include Gly-168, Ser-205, and 226–227; that span reads GG.

Belongs to the triosephosphate isomerase family. Homodimer.

The protein localises to the cytoplasm. The enzyme catalyses D-glyceraldehyde 3-phosphate = dihydroxyacetone phosphate. It participates in carbohydrate biosynthesis; gluconeogenesis. It functions in the pathway carbohydrate degradation; glycolysis; D-glyceraldehyde 3-phosphate from glycerone phosphate: step 1/1. Its function is as follows. Involved in the gluconeogenesis. Catalyzes stereospecifically the conversion of dihydroxyacetone phosphate (DHAP) to D-glyceraldehyde-3-phosphate (G3P). This is Triosephosphate isomerase from Azoarcus sp. (strain BH72).